Consider the following 372-residue polypeptide: 4-hydroxy-3-methylbut-2-en-1-yl diphosphate synthase (flavodoxin) (372 aa).

[4Fe-4S] cluster-binding residues include Cys270, Cys273, Cys305, and Glu312.

The protein belongs to the IspG family. [4Fe-4S] cluster is required as a cofactor.

The enzyme catalyses (2E)-4-hydroxy-3-methylbut-2-enyl diphosphate + oxidized [flavodoxin] + H2O + 2 H(+) = 2-C-methyl-D-erythritol 2,4-cyclic diphosphate + reduced [flavodoxin]. It participates in isoprenoid biosynthesis; isopentenyl diphosphate biosynthesis via DXP pathway; isopentenyl diphosphate from 1-deoxy-D-xylulose 5-phosphate: step 5/6. In terms of biological role, converts 2C-methyl-D-erythritol 2,4-cyclodiphosphate (ME-2,4cPP) into 1-hydroxy-2-methyl-2-(E)-butenyl 4-diphosphate. The protein is 4-hydroxy-3-methylbut-2-en-1-yl diphosphate synthase (flavodoxin) of Salmonella arizonae (strain ATCC BAA-731 / CDC346-86 / RSK2980).